The chain runs to 182 residues: Large ribosomal subunit protein uL16 (182 aa).

Belongs to the universal ribosomal protein uL16 family.

This Pyrobaculum islandicum (strain DSM 4184 / JCM 9189 / GEO3) protein is Large ribosomal subunit protein uL16.